Reading from the N-terminus, the 57-residue chain is UPF0391 membrane protein RPD_3366 (57 aa).

The next 2 helical transmembrane spans lie at 4–24 and 30–50; these read WVVT…GGIA and IAKV…VVGL.

This sequence belongs to the UPF0391 family.

The protein resides in the cell membrane. The protein is UPF0391 membrane protein RPD_3366 of Rhodopseudomonas palustris (strain BisB5).